A 757-amino-acid polypeptide reads, in one-letter code: Cap-specific mRNA (nucleoside-2'-O-)-methyltransferase 1 (757 aa).

Positions 1-61 are disordered; it reads MFQSNQYDEY…EDDEEEEDTP (61 aa). 2 stretches are compositionally biased toward acidic residues: residues 18 to 32 and 40 to 59; these read EENESNENENENENE and GDQDSEDSFIYEEDDEEEED. The region spanning 62-108 is the G-patch domain; the sequence is KLSFGAKFLAKHGHIEGQGLGKEKDGRIDLIEVDRFQSTKGLGFAEN. One can recognise a RrmJ-type SAM-dependent 2'-O-MTase domain in the interval 214–438; sequence IFINRAAVKM…ERYIICKNFL (225 aa). Gly257, Glu301, and Asp352 together coordinate S-adenosyl-L-methionine. Lys392 (proton acceptor) is an active-site residue. The span at 538–548 shows a compositional bias: basic residues; that stretch reads HKNRQKHHHNN. The interval 538–670 is disordered; the sequence is HKNRQKHHHN…NNNNNNNNKN (133 aa). Low complexity predominate over residues 549 to 569; sequence HSNNNNNNNNSNNNNNNNNQH. Basic residues predominate over residues 570 to 581; sequence QHQHHQHQHHQN. Residues 597-668 are compositionally biased toward low complexity; the sequence is NNNINNNSNN…NNNNNNNNNN (72 aa).

It carries out the reaction a 5'-end (N(7)-methyl 5'-triphosphoguanosine)-ribonucleoside in mRNA + S-adenosyl-L-methionine = a 5'-end (N(7)-methyl 5'-triphosphoguanosine)-(2'-O-methyl-ribonucleoside) in mRNA + S-adenosyl-L-homocysteine + H(+). Its function is as follows. S-adenosyl-L-methionine-dependent methyltransferase that mediates mRNA cap1 2'-O-ribose methylation to the 5'-cap structure of mRNAs. Methylates the ribose of the first nucleotide of a m(7)GpppG-capped mRNA to produce m(7)GpppNmp (cap1). Cap1 modification is linked to higher levels of translation. In Dictyostelium discoideum (Social amoeba), this protein is Cap-specific mRNA (nucleoside-2'-O-)-methyltransferase 1.